A 150-amino-acid polypeptide reads, in one-letter code: Lipoprotein signal peptidase (150 aa).

A run of 3 helical transmembrane segments spans residues 8–28 (FYAL…LAHA), 58–78 (GFSW…GWFL), and 81–101 (TTGS…NVFD). Catalysis depends on residues Asp-116 and Asp-132. A helical membrane pass occupies residues 126–146 (VVFNIADLFILAGVFGTFLFL).

This sequence belongs to the peptidase A8 family.

Its subcellular location is the cell membrane. It carries out the reaction Release of signal peptides from bacterial membrane prolipoproteins. Hydrolyzes -Xaa-Yaa-Zaa-|-(S,diacylglyceryl)Cys-, in which Xaa is hydrophobic (preferably Leu), and Yaa (Ala or Ser) and Zaa (Gly or Ala) have small, neutral side chains.. The protein operates within protein modification; lipoprotein biosynthesis (signal peptide cleavage). Functionally, this protein specifically catalyzes the removal of signal peptides from prolipoproteins. This is Lipoprotein signal peptidase from Tropheryma whipplei (strain TW08/27) (Whipple's bacillus).